The sequence spans 1141 residues: DNA polymerase II large subunit (1141 aa).

The interval A567 to K587 is disordered.

Belongs to the archaeal DNA polymerase II family. As to quaternary structure, heterodimer of a large subunit and a small subunit.

The enzyme catalyses DNA(n) + a 2'-deoxyribonucleoside 5'-triphosphate = DNA(n+1) + diphosphate. The catalysed reaction is Exonucleolytic cleavage in the 3'- to 5'-direction to yield nucleoside 5'-phosphates.. In terms of biological role, possesses two activities: a DNA synthesis (polymerase) and an exonucleolytic activity that degrades single-stranded DNA in the 3'- to 5'-direction. Has a template-primer preference which is characteristic of a replicative DNA polymerase. This chain is DNA polymerase II large subunit, found in Methanocorpusculum labreanum (strain ATCC 43576 / DSM 4855 / Z).